We begin with the raw amino-acid sequence, 172 residues long: Large ribosomal subunit protein eL20A (172 aa).

Residue Ser32 is modified to Phosphoserine. Residues Lys125, Lys131, and Lys149 each participate in a glycyl lysine isopeptide (Lys-Gly) (interchain with G-Cter in ubiquitin) cross-link.

This sequence belongs to the eukaryotic ribosomal protein eL20 family. Component of the large ribosomal subunit (LSU). Mature yeast ribosomes consist of a small (40S) and a large (60S) subunit. The 40S small subunit contains 1 molecule of ribosomal RNA (18S rRNA) and 33 different proteins (encoded by 57 genes). The large 60S subunit contains 3 rRNA molecules (25S, 5.8S and 5S rRNA) and 46 different proteins (encoded by 81 genes). eL20 forms multiple interactions with RNA and proteins in the central protuberance, connecting components of core functional centers that are located far apart.

The protein localises to the cytoplasm. Its function is as follows. Component of the ribosome, a large ribonucleoprotein complex responsible for the synthesis of proteins in the cell. The small ribosomal subunit (SSU) binds messenger RNAs (mRNAs) and translates the encoded message by selecting cognate aminoacyl-transfer RNA (tRNA) molecules. The large subunit (LSU) contains the ribosomal catalytic site termed the peptidyl transferase center (PTC), which catalyzes the formation of peptide bonds, thereby polymerizing the amino acids delivered by tRNAs into a polypeptide chain. The nascent polypeptides leave the ribosome through a tunnel in the LSU and interact with protein factors that function in enzymatic processing, targeting, and the membrane insertion of nascent chains at the exit of the ribosomal tunnel. The chain is Large ribosomal subunit protein eL20A from Saccharomyces cerevisiae (strain ATCC 204508 / S288c) (Baker's yeast).